A 263-amino-acid chain; its full sequence is Putative TATA-binding protein pB263R (263 aa).

It belongs to the asfivirus B263R family.

Functionally, putative TATA-binding protein. In African swine fever virus (isolate Pig/Kenya/KEN-50/1950) (ASFV), this protein is Putative TATA-binding protein pB263R.